Consider the following 180-residue polypeptide: NADH-quinone oxidoreductase subunit I (180 aa).

2 consecutive 4Fe-4S ferredoxin-type domains span residues 50–80 (LTRD…LQKA) and 90–119 (EFFR…LTPD). Residues cysteine 60, cysteine 63, cysteine 66, cysteine 70, cysteine 99, cysteine 102, cysteine 105, and cysteine 109 each contribute to the [4Fe-4S] cluster site.

It belongs to the complex I 23 kDa subunit family. In terms of assembly, NDH-1 is composed of 13 different subunits. Subunits NuoA, H, J, K, L, M, N constitute the membrane sector of the complex. [4Fe-4S] cluster serves as cofactor.

It is found in the cell inner membrane. The catalysed reaction is a quinone + NADH + 5 H(+)(in) = a quinol + NAD(+) + 4 H(+)(out). Functionally, NDH-1 shuttles electrons from NADH, via FMN and iron-sulfur (Fe-S) centers, to quinones in the respiratory chain. The immediate electron acceptor for the enzyme in this species is believed to be ubiquinone. Couples the redox reaction to proton translocation (for every two electrons transferred, four hydrogen ions are translocated across the cytoplasmic membrane), and thus conserves the redox energy in a proton gradient. The protein is NADH-quinone oxidoreductase subunit I of Yersinia enterocolitica serotype O:8 / biotype 1B (strain NCTC 13174 / 8081).